Reading from the N-terminus, the 93-residue chain is MPRSLKKGPYVASHLLEKIEKQKNLKNKKVIQTWSRSSMITPVFVGHKIAVYNGREHIPIYITENMVGHKLGEFFSTRTYRGHNKKDKKGQKK.

This sequence belongs to the universal ribosomal protein uS19 family.

Its function is as follows. Protein S19 forms a complex with S13 that binds strongly to the 16S ribosomal RNA. This chain is Small ribosomal subunit protein uS19, found in Phytoplasma australiense.